The following is a 405-amino-acid chain: Argininosuccinate synthase (405 aa).

ATP is bound by residues 10-18 and Ala37; that span reads AYSGGLDTS. L-citrulline-binding residues include Tyr88 and Ser93. Gly118 lines the ATP pocket. Residues Thr120, Asn124, and Asp125 each coordinate L-aspartate. Residue Asn124 coordinates L-citrulline. The L-citrulline site is built by Arg128, Ser179, Ser188, Glu264, and Tyr276.

It belongs to the argininosuccinate synthase family. Type 1 subfamily. Homotetramer.

Its subcellular location is the cytoplasm. It catalyses the reaction L-citrulline + L-aspartate + ATP = 2-(N(omega)-L-arginino)succinate + AMP + diphosphate + H(+). It functions in the pathway amino-acid biosynthesis; L-arginine biosynthesis; L-arginine from L-ornithine and carbamoyl phosphate: step 2/3. The chain is Argininosuccinate synthase from Ectopseudomonas mendocina (strain ymp) (Pseudomonas mendocina).